The primary structure comprises 149 residues: Calmodulin (149 aa).

Ala-2 carries the post-translational modification N-acetylalanine. 4 consecutive EF-hand domains span residues 8–43, 44–79, 81–116, and 117–149; these read EQIA…LGQN, PTEA…KMKD, DSEE…LGEK, and LTDE…MMAK. Ca(2+) contacts are provided by Asp-21, Asp-23, Asp-25, Thr-27, Glu-32, Asp-57, Asp-59, Asn-61, Thr-63, Glu-68, Asp-94, Asp-96, Asn-98, and Glu-105. Lys-116 is subject to N6,N6,N6-trimethyllysine. Positions 130, 132, 134, 136, and 141 each coordinate Ca(2+).

Belongs to the calmodulin family.

Its function is as follows. Calmodulin mediates the control of a large number of enzymes, ion channels and other proteins by Ca(2+). Among the enzymes to be stimulated by the calmodulin-Ca(2+) complex are a number of protein kinases and phosphatases. In Macrocystis pyrifera (Giant kelp), this protein is Calmodulin.